A 394-amino-acid chain; its full sequence is GTPase Obg (394 aa).

An Obg domain is found at 4–162 (SNFVDYVKIY…LMVILELKLL (159 aa)). The OBG-type G domain maps to 163–329 (ADVGLVGFPN…LKDILWTELN (167 aa)). GTP contacts are provided by residues 169–176 (GFPNAGKS), 194–198 (FTTLE), 216–219 (DIPG), 283–286 (TKSD), and 310–312 (SSV). Mg(2+) is bound by residues S176 and T196. The segment at 358–394 (KDMGEDEDFEYEYEEDADDDFDYEYEDENWDEEEEKK) is disordered. Positions 361–394 (GEDEDFEYEYEEDADDDFDYEYEDENWDEEEEKK) are enriched in acidic residues.

It belongs to the TRAFAC class OBG-HflX-like GTPase superfamily. OBG GTPase family. In terms of assembly, monomer. Requires Mg(2+) as cofactor.

It localises to the cytoplasm. Functionally, an essential GTPase which binds GTP, GDP and possibly (p)ppGpp with moderate affinity, with high nucleotide exchange rates and a fairly low GTP hydrolysis rate. Plays a role in control of the cell cycle, stress response, ribosome biogenesis and in those bacteria that undergo differentiation, in morphogenesis control. In Phocaeicola vulgatus (strain ATCC 8482 / DSM 1447 / JCM 5826 / CCUG 4940 / NBRC 14291 / NCTC 11154) (Bacteroides vulgatus), this protein is GTPase Obg.